We begin with the raw amino-acid sequence, 430 residues long: Adenylosuccinate synthetase (430 aa).

GTP-binding positions include 12-18 (GDEGKGK) and 40-42 (GHT). Catalysis depends on Asp13, which acts as the Proton acceptor. Residues Asp13 and Gly40 each contribute to the Mg(2+) site. Residues 13-16 (DEGK), 38-41 (NAGH), Thr130, Arg144, Gln224, Thr239, and Arg303 contribute to the IMP site. His41 (proton donor) is an active-site residue. 299–305 (TNTGRAR) provides a ligand contact to substrate. GTP contacts are provided by residues Arg305, 331 to 333 (KLD), and 413 to 415 (STS).

The protein belongs to the adenylosuccinate synthetase family. In terms of assembly, homodimer. Mg(2+) serves as cofactor.

It localises to the cytoplasm. The catalysed reaction is IMP + L-aspartate + GTP = N(6)-(1,2-dicarboxyethyl)-AMP + GDP + phosphate + 2 H(+). Its pathway is purine metabolism; AMP biosynthesis via de novo pathway; AMP from IMP: step 1/2. Functionally, plays an important role in the de novo pathway of purine nucleotide biosynthesis. Catalyzes the first committed step in the biosynthesis of AMP from IMP. The sequence is that of Adenylosuccinate synthetase from Hyphomonas neptunium (strain ATCC 15444).